Here is a 357-residue protein sequence, read N- to C-terminus: ATP-dependent 6-phosphofructokinase (357 aa).

Residues Gly-12, 80–81 (KG), and 107–110 (GDGS) contribute to the ATP site. Asp-108 contacts Mg(2+). Substrate contacts are provided by residues 131–133 (TID), Arg-168, 175–177 (MGR), Glu-229, Arg-272, and 278–281 (HIQR). Residue Asp-133 is the Proton acceptor of the active site.

Belongs to the phosphofructokinase type A (PFKA) family. Mixed-substrate PFK group III subfamily. Homodimer or homotetramer. Mg(2+) is required as a cofactor.

The protein localises to the cytoplasm. The catalysed reaction is beta-D-fructose 6-phosphate + ATP = beta-D-fructose 1,6-bisphosphate + ADP + H(+). The protein operates within carbohydrate degradation; glycolysis; D-glyceraldehyde 3-phosphate and glycerone phosphate from D-glucose: step 3/4. Subject to allosteric activation by ADP and other diphosphonucleosides, and inhibition by phosphoenolpyruvate. Catalyzes the phosphorylation of D-fructose 6-phosphate to fructose 1,6-bisphosphate by ATP, the first committing step of glycolysis. In Trichormus variabilis (strain ATCC 29413 / PCC 7937) (Anabaena variabilis), this protein is ATP-dependent 6-phosphofructokinase.